A 508-amino-acid polypeptide reads, in one-letter code: Photosystem II CP47 reaction center protein (508 aa).

Transmembrane regions (helical) follow at residues 21–36, 101–115, 140–156, 203–218, 237–252, and 457–472; these read SVHIMHTALVAGWAGS, IVFSGLCFLAAIWHW, GIHLFLSGVACFGFGAF, IAAGTLGILAGLFHLS, VLSSSIAAVFFAAFVV, and SFALLFFFGHIWHGAR.

Belongs to the PsbB/PsbC family. PsbB subfamily. In terms of assembly, PSII is composed of 1 copy each of membrane proteins PsbA, PsbB, PsbC, PsbD, PsbE, PsbF, PsbH, PsbI, PsbJ, PsbK, PsbL, PsbM, PsbT, PsbX, PsbY, PsbZ, Psb30/Ycf12, at least 3 peripheral proteins of the oxygen-evolving complex and a large number of cofactors. It forms dimeric complexes. Binds multiple chlorophylls. PSII binds additional chlorophylls, carotenoids and specific lipids. is required as a cofactor.

The protein resides in the plastid. It localises to the chloroplast thylakoid membrane. Functionally, one of the components of the core complex of photosystem II (PSII). It binds chlorophyll and helps catalyze the primary light-induced photochemical processes of PSII. PSII is a light-driven water:plastoquinone oxidoreductase, using light energy to abstract electrons from H(2)O, generating O(2) and a proton gradient subsequently used for ATP formation. This is Photosystem II CP47 reaction center protein from Atropa belladonna (Belladonna).